Consider the following 334-residue polypeptide: Biotin synthase (334 aa).

Residues 55–285 (GSSGSIHACS…VHPRKIIKIA (231 aa)) enclose the Radical SAM core domain. 3 residues coordinate [4Fe-4S] cluster: cysteine 73, cysteine 77, and cysteine 80. 3 residues coordinate [2Fe-2S] cluster: cysteine 152, cysteine 213, and lysine 283.

This sequence belongs to the radical SAM superfamily. Biotin synthase family. Homodimer. [4Fe-4S] cluster serves as cofactor. It depends on [2Fe-2S] cluster as a cofactor.

The enzyme catalyses (4R,5S)-dethiobiotin + (sulfur carrier)-SH + 2 reduced [2Fe-2S]-[ferredoxin] + 2 S-adenosyl-L-methionine = (sulfur carrier)-H + biotin + 2 5'-deoxyadenosine + 2 L-methionine + 2 oxidized [2Fe-2S]-[ferredoxin]. It functions in the pathway cofactor biosynthesis; biotin biosynthesis; biotin from 7,8-diaminononanoate: step 2/2. Functionally, catalyzes the conversion of dethiobiotin (DTB) to biotin by the insertion of a sulfur atom into dethiobiotin via a radical-based mechanism. This Chlorobium phaeobacteroides (strain DSM 266 / SMG 266 / 2430) protein is Biotin synthase.